Consider the following 198-residue polypeptide: Superoxide dismutase [Fe] (198 aa).

Fe cation contacts are provided by His-27, His-74, Asp-158, and His-162.

It belongs to the iron/manganese superoxide dismutase family. In terms of assembly, homodimer. The cofactor is Fe cation.

It is found in the cytoplasm. It carries out the reaction 2 superoxide + 2 H(+) = H2O2 + O2. Functionally, destroys superoxide anion radicals which are normally produced within the cells and which are toxic to biological systems. The protein is Superoxide dismutase [Fe] (SODB) of Plasmodium malariae.